The sequence spans 389 residues: Glutamate 5-kinase (389 aa).

Residue lysine 16 participates in ATP binding. Positions 56, 143, and 155 each coordinate substrate. ATP is bound at residue 175–176 (SD). A PUA domain is found at 281–358 (AGELHVDDGA…AEIETILGYP (78 aa)).

Belongs to the glutamate 5-kinase family.

It is found in the cytoplasm. The enzyme catalyses L-glutamate + ATP = L-glutamyl 5-phosphate + ADP. It participates in amino-acid biosynthesis; L-proline biosynthesis; L-glutamate 5-semialdehyde from L-glutamate: step 1/2. Functionally, catalyzes the transfer of a phosphate group to glutamate to form L-glutamate 5-phosphate. This is Glutamate 5-kinase from Rhizobium johnstonii (strain DSM 114642 / LMG 32736 / 3841) (Rhizobium leguminosarum bv. viciae).